A 392-amino-acid chain; its full sequence is Anhydro-N-acetylmuramic acid kinase (392 aa).

Position 22–29 (22–29 (GTSMDGVD)) interacts with ATP.

The protein belongs to the anhydro-N-acetylmuramic acid kinase family.

It catalyses the reaction 1,6-anhydro-N-acetyl-beta-muramate + ATP + H2O = N-acetyl-D-muramate 6-phosphate + ADP + H(+). It participates in amino-sugar metabolism; 1,6-anhydro-N-acetylmuramate degradation. It functions in the pathway cell wall biogenesis; peptidoglycan recycling. Its function is as follows. Catalyzes the specific phosphorylation of 1,6-anhydro-N-acetylmuramic acid (anhMurNAc) with the simultaneous cleavage of the 1,6-anhydro ring, generating MurNAc-6-P. Is required for the utilization of anhMurNAc either imported from the medium or derived from its own cell wall murein, and thus plays a role in cell wall recycling. The chain is Anhydro-N-acetylmuramic acid kinase from Burkholderia mallei (strain NCTC 10229).